We begin with the raw amino-acid sequence, 430 residues long: Histidine--tRNA ligase (430 aa).

Belongs to the class-II aminoacyl-tRNA synthetase family. As to quaternary structure, homodimer.

It is found in the cytoplasm. It catalyses the reaction tRNA(His) + L-histidine + ATP = L-histidyl-tRNA(His) + AMP + diphosphate + H(+). This chain is Histidine--tRNA ligase, found in Chlamydia abortus (strain DSM 27085 / S26/3) (Chlamydophila abortus).